The following is an 85-amino-acid chain: Metallothionein-like protein 4B (85 aa).

The interval 1-20 is disordered; sequence MADTGKGSASASCNDRCGCP.

This sequence belongs to the metallothionein superfamily. Type 15 family. As to expression, expressed specifically in seeds.

The protein resides in the cytoplasm. The protein localises to the nucleus. It is found in the cell membrane. Metallothioneins have a high content of cysteine residues that bind various heavy metals. Functions as a metal chelator of copper (Cu) and zinc (Zn). Plays a role in storing and distributing Zn ion in seed. In Arabidopsis thaliana (Mouse-ear cress), this protein is Metallothionein-like protein 4B (MT4B).